A 251-amino-acid chain; its full sequence is uncharacterized protein (251 aa).

Positions 1–25 (MRKKKFLSRFSFSSLFLLCGTLLSA) are cleaved as a signal peptide. Cys-26 is lipidated: N-palmitoyl cysteine. A lipid anchor (S-diacylglycerol cysteine) is attached at Cys-26.

It belongs to the MG439/MG440 family.

It localises to the cell membrane. This is an uncharacterized protein from Mycoplasma pneumoniae (strain ATCC 29342 / M129 / Subtype 1) (Mycoplasmoides pneumoniae).